The sequence spans 161 residues: 2-C-methyl-D-erythritol 2,4-cyclodiphosphate synthase (161 aa).

A divalent metal cation is bound by residues D10 and H12. 4-CDP-2-C-methyl-D-erythritol 2-phosphate is bound by residues 10–12 and 36–37; these read DVH and HS. H44 contributes to the a divalent metal cation binding site. Residues 58–60, 63–67, and R144 contribute to the 4-CDP-2-C-methyl-D-erythritol 2-phosphate site; these read DIG and FSDTD.

Belongs to the IspF family. In terms of assembly, homotrimer. Requires a divalent metal cation as cofactor.

It catalyses the reaction 4-CDP-2-C-methyl-D-erythritol 2-phosphate = 2-C-methyl-D-erythritol 2,4-cyclic diphosphate + CMP. The protein operates within isoprenoid biosynthesis; isopentenyl diphosphate biosynthesis via DXP pathway; isopentenyl diphosphate from 1-deoxy-D-xylulose 5-phosphate: step 4/6. Functionally, involved in the biosynthesis of isopentenyl diphosphate (IPP) and dimethylallyl diphosphate (DMAPP), two major building blocks of isoprenoid compounds. Catalyzes the conversion of 4-diphosphocytidyl-2-C-methyl-D-erythritol 2-phosphate (CDP-ME2P) to 2-C-methyl-D-erythritol 2,4-cyclodiphosphate (ME-CPP) with a corresponding release of cytidine 5-monophosphate (CMP). The protein is 2-C-methyl-D-erythritol 2,4-cyclodiphosphate synthase of Burkholderia ambifaria (strain ATCC BAA-244 / DSM 16087 / CCUG 44356 / LMG 19182 / AMMD) (Burkholderia cepacia (strain AMMD)).